Consider the following 318-residue polypeptide: C1GALT1-specific chaperone 1 (318 aa).

Over 1–6 the chain is Cytoplasmic; it reads MLSESS. Residues 7–26 traverse the membrane as a helical; Signal-anchor for type II membrane protein segment; that stretch reads SFLKGVMLGSIFCALITMLG. The Lumenal portion of the chain corresponds to 27–318; sequence HIRIGHGSRM…FLPPNGSDND (292 aa).

The protein belongs to the glycosyltransferase 31 family. Beta3-Gal-T subfamily. Associates with core 1 beta-3-galactosyltransferase (C1GALT1), probably not with the soluble active form.

Its subcellular location is the membrane. Probable chaperone required for the generation of 1 O-glycan Gal-beta1-3GalNAc-alpha1-Ser/Thr (T antigen), which is a precursor for many extended O-glycans in glycoproteins. Probably acts as a specific molecular chaperone assisting the folding/stability of core 1 beta-3-galactosyltransferase (C1GALT1). The protein is C1GALT1-specific chaperone 1 (C1GALT1C1) of Bos taurus (Bovine).